A 541-amino-acid polypeptide reads, in one-letter code: Chaperonin GroEL 1 (541 aa).

ATP contacts are provided by residues 29 to 32, 86 to 90, Gly-413, and Asp-492; these read TLGP and DGTTT.

It belongs to the chaperonin (HSP60) family. As to quaternary structure, forms a cylinder of 14 subunits composed of two heptameric rings stacked back-to-back. Interacts with the co-chaperonin GroES.

Its subcellular location is the cytoplasm. It catalyses the reaction ATP + H2O + a folded polypeptide = ADP + phosphate + an unfolded polypeptide.. Its function is as follows. Together with its co-chaperonin GroES, plays an essential role in assisting protein folding. The GroEL-GroES system forms a nano-cage that allows encapsulation of the non-native substrate proteins and provides a physical environment optimized to promote and accelerate protein folding. The chain is Chaperonin GroEL 1 from Rhodococcus jostii (strain RHA1).